Consider the following 275-residue polypeptide: UBX domain-containing protein 8 (275 aa).

Position 1 (Met-1) is a topological domain, cytoplasmic. Residues 2–22 (ASRGVVGIFLLSALPLLCLEL) form a helical membrane-spanning segment. Over 23 to 33 (RRGKPDLGIKD) the chain is Lumenal. The chain crosses the membrane as a helical span at residues 34–54 (LILLCGRIFLLLALLTLIISV). Residues 55–275 (TTSWVNSFKP…LNVEEKEQSS (221 aa)) lie on the Cytoplasmic side of the membrane. Residues 137–181 (DEDLELDSESQTSFETSNREAAKRRNLPNSVTNISPPAEQPTKKE) form a disordered region. One can recognise a UBX domain in the interval 192–268 (TAEEVVTVAL…GITVDTVLNV (77 aa)).

Interacts with SYVN1 and VCP.

The protein resides in the endoplasmic reticulum membrane. Its function is as follows. Involved in endoplasmic reticulum-associated degradation (ERAD) for misfolded lumenal proteins, possibly by tethering VCP to the endoplasmic reticulum membrane. May play a role in reproduction. Functionally, may play a role in reproduction. In Bos taurus (Bovine), this protein is UBX domain-containing protein 8 (UBXN8).